An 835-amino-acid polypeptide reads, in one-letter code: Cap-specific mRNA (nucleoside-2'-O-)-methyltransferase 1 (835 aa).

A disordered region spans residues 1-67; that stretch reads MKRRTDPECT…EGKQHSSDSF (67 aa). The short motif at 2–19 is the Bipartite nuclear localization signal element; the sequence is KRRTDPECTAPIKKQKKR. A phosphoserine mark is found at Ser28, Ser31, Ser53, Ser66, and Ser91. Polar residues predominate over residues 37–54; that stretch reads SSVSHGAKASTTSLSGSD. Positions 57–67 are enriched in basic and acidic residues; it reads TEGKQHSSDSF. The G-patch domain occupies 87–133; the sequence is YNSVSQKLMAKMGFREGEGLGKYSQGRKDIVEASSQKGRRGLGLTLR. Lys108 is modified (N6-acetyllysine). Substrate contacts are provided by residues 203 to 207 and Arg218; that span reads KSVFD. Positions 231 to 450 constitute a RrmJ-type SAM-dependent 2'-O-MTase domain; the sequence is FFLNRAAMKM…ERYVVCKGLK (220 aa). An S-adenosyl-L-methionine-binding site is contributed by Asn234. The active site involves Lys239. Residues 277–283 and 335–336 each bind S-adenosyl-L-methionine; these read CAGPGGF and DI. Asp364 is an active-site residue. 374-376 is a substrate binding site; sequence NLQ. The active-site Proton acceptor is Lys404. A substrate-binding site is contributed by Asn439. The interval 727 to 835 is interaction with POLR2A; that stretch reads SSGTPKLSYT…VLSFIQMHRA (109 aa). A WW domain is found at 752–786; it reads RTVNEPWTMGFSKSFKKKFFYNKKTKDSTFDLPAD.

In terms of assembly, interacts with POLR2A (via C-terminus).

The protein localises to the nucleus. It carries out the reaction a 5'-end (N(7)-methyl 5'-triphosphoguanosine)-ribonucleoside in mRNA + S-adenosyl-L-methionine = a 5'-end (N(7)-methyl 5'-triphosphoguanosine)-(2'-O-methyl-ribonucleoside) in mRNA + S-adenosyl-L-homocysteine + H(+). S-adenosyl-L-methionine-dependent methyltransferase that mediates mRNA cap1 2'-O-ribose methylation to the 5'-cap structure of mRNAs. Methylates the ribose of the first nucleotide of a m(7)GpppG-capped mRNA and small nuclear RNA (snRNA) to produce m(7)GpppRm (cap1). Displays a preference for cap0 transcripts. Cap1 modification is linked to higher levels of translation. May be involved in the interferon response pathway. This chain is Cap-specific mRNA (nucleoside-2'-O-)-methyltransferase 1 (CMTR1), found in Homo sapiens (Human).